We begin with the raw amino-acid sequence, 275 residues long: Autophagy protein 5 (275 aa).

N-acetylmethionine is present on Met-1. Lys-130 participates in a covalent cross-link: Glycyl lysine isopeptide (Lys-Gly) (interchain with G-Cter in ATG12).

Belongs to the ATG5 family. In terms of assembly, forms a conjugate with ATG12. Part of the minor complex composed of 4 sets of ATG12-ATG5 and ATG16L1 (400 kDa); this complex interacts with ATG3 leading to disruption of ATG7 interaction and promotion of ATG8-like proteins lipidation. Forms an 800-kDa complex composed of ATG12-ATG5 and ATG16L2. The ATG12-ATG5 conjugate interacts with RAB33A; this interaction is bridged by ATG16L1 and promotes ATG12-ATG5-ATG16L1 complex recruitment to phagophores. Interacts with TECPR1; the interaction is direct and does not take place when ATG16L1 is associated with the ATG5-ATG12 conjugate. Interacts with DHX58/RIG-1, IFIH1/MDA5 and MAVS/IPS-1 in monomeric form as well as in ATG12-ATG5 conjugate form. The interaction with MAVS is further enhanced upon vesicular stomatitis virus (VSV) infection. Interacts with ATG3. Interacts with ATG7 and ATG10. Interacts with FADD. Interacts with Bassoon/BSN; this interaction is important for the regulation of presynaptic autophagy. Interacts with ATG16L2. Conjugated to ATG12; which is essential for autophagy, but is not required for association with isolation membrane. In terms of processing, acetylated by EP300.

Its subcellular location is the cytoplasm. It localises to the preautophagosomal structure membrane. Its function is as follows. Involved in autophagic vesicle formation. Conjugation with ATG12, through a ubiquitin-like conjugating system involving ATG7 as an E1-like activating enzyme and ATG10 as an E2-like conjugating enzyme, is essential for its function. The ATG12-ATG5 conjugate acts as an E3-like enzyme which is required for lipidation of ATG8 family proteins and their association to the vesicle membranes. Involved in mitochondrial quality control after oxidative damage, and in subsequent cellular longevity. Plays a critical role in multiple aspects of lymphocyte development and is essential for both B and T lymphocyte survival and proliferation. Required for optimal processing and presentation of antigens for MHC II. Involved in the maintenance of axon morphology and membrane structures, as well as in normal adipocyte differentiation. Promotes primary ciliogenesis through removal of OFD1 from centriolar satellites and degradation of IFT20 via the autophagic pathway. As part of the ATG8 conjugation system with ATG12 and ATG16L1, required for recruitment of LRRK2 to stressed lysosomes and induction of LRRK2 kinase activity in response to lysosomal stress. Functionally, may play an important role in the apoptotic process, possibly within the modified cytoskeleton. Its expression is a relatively late event in the apoptotic process, occurring downstream of caspase activity. Plays a crucial role in IFN-gamma-induced autophagic cell death by interacting with FADD. This Sus scrofa (Pig) protein is Autophagy protein 5.